A 171-amino-acid polypeptide reads, in one-letter code: Large ribosomal subunit protein uL10 (171 aa).

The protein belongs to the universal ribosomal protein uL10 family. In terms of assembly, part of the ribosomal stalk of the 50S ribosomal subunit. The N-terminus interacts with L11 and the large rRNA to form the base of the stalk. The C-terminus forms an elongated spine to which L12 dimers bind in a sequential fashion forming a multimeric L10(L12)X complex.

In terms of biological role, forms part of the ribosomal stalk, playing a central role in the interaction of the ribosome with GTP-bound translation factors. This chain is Large ribosomal subunit protein uL10, found in Zymomonas mobilis subsp. mobilis (strain ATCC 31821 / ZM4 / CP4).